Consider the following 324-residue polypeptide: uncharacterized protein (324 aa).

The next 9 helical transmembrane spans lie at 34 to 54, 76 to 96, 103 to 123, 127 to 147, 158 to 178, 198 to 218, 243 to 263, 275 to 295, and 297 to 317; these read MAVLQSLNIFLGEACLWFYVL, VFMALPAIMDICGSTLMNVGL, IYQMTRGSLIIFVALFATTLL, IGQLQWLSLSFVVLGVAIVGY, PILGITAVLIGQFFLATQFTI, GTYGVFFVLLGMIISYYFIGS, YVISGVILVSIAFFNVSGLAI, LDIARTFGIWIIAMAMGMESF, and LLQFLGFVLLIYGIFTYHSII.

The protein localises to the membrane. This is an uncharacterized protein from Schizosaccharomyces pombe (strain 972 / ATCC 24843) (Fission yeast).